The chain runs to 352 residues: MNFIHDYRSPRVIFGPDSLARLPQELERLGIDRALVLTTPEQAPLGRQVAEPVIGHVAAFYDGATMHVPALVAEEACKIARTSEANGVIAIGGGSTIGLAKIVALRTELPIVAVPTTYAGSEMTSIFGITEGGVKKTGRDARVMPRAVIYEPRLTLELPLSISVTSAINAIAHAVEGLYAPDATPLLTIMAQEGIAATVRAISRMYQSPRDLQARGDALYGAWLCASVLGNVSMALHHKLCHTLGGTLDLPHAQTHTVVLPHALAYNARAVPDAMRVLRIALGHDDPPTALYELARDNGAPVALRDLGMREEDIEHVGDLALQDRYPNPRELDRDALLALLRDAYHGRPPSA.

Belongs to the iron-containing alcohol dehydrogenase family.

The enzyme catalyses 3-oxoadipate + NAD(+) = maleylacetate + NADH + H(+). The catalysed reaction is 3-oxoadipate + NADP(+) = maleylacetate + NADPH + H(+). Its pathway is aromatic compound metabolism; 3-chlorocatechol degradation. The protein is Maleylacetate reductase (clcE) of Pseudomonas knackmussii (strain DSM 6978 / CCUG 54928 / LMG 23759 / B13).